We begin with the raw amino-acid sequence, 657 residues long: Probable serine/threonine-protein kinase CA_C1728 (657 aa).

One can recognise a Protein kinase domain in the interval 10–274 (YKIEEEIGVG…ELSNVKNNYV (265 aa)). ATP contacts are provided by residues 16–24 (IGVGGTAVV) and Lys-39. Asp-143 functions as the Proton acceptor in the catalytic mechanism. The disordered stretch occupies residues 286-334 (PAQIQNESNPNNKLDNDDTYYNGEPYNKEQPQEEPQEENEEPKNKIKGN). Over residues 288-298 (QIQNESNPNNK) the composition is skewed to polar residues. PASTA domains follow at residues 375–441 (SVSK…DISS), 443–509 (DTDQ…VISR), and 512–577 (EVKK…VIGR). The tract at residues 581–657 (TAVQPPNNNN…TNTPNGTGQK (77 aa)) is disordered. Low complexity-rich tracts occupy residues 584-600 (QPPN…QNQN), 613-637 (PTGG…PAGG), and 645-657 (GNVT…TGQK).

Belongs to the protein kinase superfamily. Ser/Thr protein kinase family.

It carries out the reaction L-seryl-[protein] + ATP = O-phospho-L-seryl-[protein] + ADP + H(+). The catalysed reaction is L-threonyl-[protein] + ATP = O-phospho-L-threonyl-[protein] + ADP + H(+). This chain is Probable serine/threonine-protein kinase CA_C1728, found in Clostridium acetobutylicum (strain ATCC 824 / DSM 792 / JCM 1419 / IAM 19013 / LMG 5710 / NBRC 13948 / NRRL B-527 / VKM B-1787 / 2291 / W).